The following is a 204-amino-acid chain: MDSDSGEQSEGEPGTAAGPHVFSSKNLALQAQKKILSKIASKTVANMLIDDTSSEIFDELYKVTEIHTHNKKEAHKIMKDAIKVAIKIGILYRNKQFSQEEVIIVEKLRKKLNQTAMTMVSFYEVEYTFDTNVLSKLLHECKDLVHELVQRHLTPRTHGRINHVFNHFADVEFLSTLYGPHGNCRPNLKRICEGINKLLDDKIL.

Residues 1–10 (MDSDSGEQSE) are compositionally biased toward acidic residues. Residues 1-20 (MDSDSGEQSEGEPGTAAGPH) are disordered. Positions 21 to 204 (VFSSKNLALQ…INKLLDDKIL (184 aa)) are binding to phosphoinositides.

Belongs to the TNFAIP8 family. Widely expressed (at protein level).

The protein localises to the cytoplasm. It localises to the cell membrane. Acts as a lipid transfer protein. Preferentially captures and shuttles two lipid second messengers, i.e., phosphatidylinositol 4,5- bisphosphate and phosphatidylinositol 3,4,5-trisphosphate and increases their levels in the plasma membrane. Additionally, may also function as a lipid-presenting protein to enhance the activity of the PI3K-AKT and MEK-ERK pathways. May act as a regulator of tumorigenesis through its activation of phospholipid signaling. This is Tumor necrosis factor alpha-induced protein 8-like protein 3 (Tnfaip8l3) from Mus musculus (Mouse).